A 626-amino-acid chain; its full sequence is Fructose-1,6-bisphosphatase class 3 (626 aa).

Belongs to the FBPase class 3 family. Mn(2+) serves as cofactor.

The catalysed reaction is beta-D-fructose 1,6-bisphosphate + H2O = beta-D-fructose 6-phosphate + phosphate. It functions in the pathway carbohydrate biosynthesis; gluconeogenesis. This Enterococcus faecalis (strain ATCC 700802 / V583) protein is Fructose-1,6-bisphosphatase class 3.